Here is a 157-residue protein sequence, read N- to C-terminus: Protein Smg (157 aa).

This sequence belongs to the Smg family.

This Klebsiella pneumoniae (strain 342) protein is Protein Smg.